A 218-amino-acid polypeptide reads, in one-letter code: Urease accessory protein UreG (218 aa).

22–29 (GPVGSGKT) provides a ligand contact to GTP.

This sequence belongs to the SIMIBI class G3E GTPase family. UreG subfamily. Homodimer. UreD, UreF and UreG form a complex that acts as a GTP-hydrolysis-dependent molecular chaperone, activating the urease apoprotein by helping to assemble the nickel containing metallocenter of UreC. The UreE protein probably delivers the nickel.

The protein localises to the cytoplasm. Facilitates the functional incorporation of the urease nickel metallocenter. This process requires GTP hydrolysis, probably effectuated by UreG. The chain is Urease accessory protein UreG from Polaromonas naphthalenivorans (strain CJ2).